The following is a 396-amino-acid chain: 1-deoxy-D-xylulose 5-phosphate reductoisomerase (396 aa).

5 residues coordinate NADPH: T10, G11, S12, I13, and N123. Residue K124 participates in 1-deoxy-D-xylulose 5-phosphate binding. Position 125 (E125) interacts with NADPH. D149 is a binding site for Mn(2+). Residues S150, E151, S185, and H208 each contribute to the 1-deoxy-D-xylulose 5-phosphate site. E151 contributes to the Mn(2+) binding site. G214 serves as a coordination point for NADPH. 1-deoxy-D-xylulose 5-phosphate is bound by residues S221, N226, K227, and E230. E230 is a Mn(2+) binding site.

Belongs to the DXR family. Mg(2+) is required as a cofactor. Requires Mn(2+) as cofactor.

The enzyme catalyses 2-C-methyl-D-erythritol 4-phosphate + NADP(+) = 1-deoxy-D-xylulose 5-phosphate + NADPH + H(+). The protein operates within isoprenoid biosynthesis; isopentenyl diphosphate biosynthesis via DXP pathway; isopentenyl diphosphate from 1-deoxy-D-xylulose 5-phosphate: step 1/6. Its function is as follows. Catalyzes the NADPH-dependent rearrangement and reduction of 1-deoxy-D-xylulose-5-phosphate (DXP) to 2-C-methyl-D-erythritol 4-phosphate (MEP). In Shewanella baltica (strain OS155 / ATCC BAA-1091), this protein is 1-deoxy-D-xylulose 5-phosphate reductoisomerase.